Reading from the N-terminus, the 143-residue chain is Anti-sigma F factor (143 aa).

It belongs to the anti-sigma-factor family.

The enzyme catalyses L-seryl-[protein] + ATP = O-phospho-L-seryl-[protein] + ADP + H(+). It catalyses the reaction L-threonyl-[protein] + ATP = O-phospho-L-threonyl-[protein] + ADP + H(+). Binds to sigma F and blocks its ability to form an RNA polymerase holoenzyme (E-sigma F). Phosphorylates SpoIIAA on a serine residue. This phosphorylation may enable SpoIIAA to act as an anti-anti-sigma factor that counteracts SpoIIAB and thus releases sigma F from inhibition. This chain is Anti-sigma F factor, found in Clostridium beijerinckii (strain ATCC 51743 / NCIMB 8052) (Clostridium acetobutylicum).